The sequence spans 95 residues: Small ribosomal subunit protein bS6 (95 aa).

It belongs to the bacterial ribosomal protein bS6 family.

In terms of biological role, binds together with bS18 to 16S ribosomal RNA. This is Small ribosomal subunit protein bS6 from Exiguobacterium sp. (strain ATCC BAA-1283 / AT1b).